Reading from the N-terminus, the 134-residue chain is Cytochrome b (134 aa).

Transmembrane regions (helical) follow at residues 33–53 (FGSLLGVCLIIQILTGLFLAM), 77–98 (WLIRYLHANGASMFFICLFLHV), and 113–133 (WNIGVLLLFAVMATAFMGYVL). Residues His-83 and His-97 each contribute to the heme b site.

It belongs to the cytochrome b family. In terms of assembly, the cytochrome bc1 complex contains 11 subunits: 3 respiratory subunits (MT-CYB, CYC1 and UQCRFS1), 2 core proteins (UQCRC1 and UQCRC2) and 6 low-molecular weight proteins (UQCRH/QCR6, UQCRB/QCR7, UQCRQ/QCR8, UQCR10/QCR9, UQCR11/QCR10 and a cleavage product of UQCRFS1). This cytochrome bc1 complex then forms a dimer. Requires heme b as cofactor.

The protein localises to the mitochondrion inner membrane. Component of the ubiquinol-cytochrome c reductase complex (complex III or cytochrome b-c1 complex) that is part of the mitochondrial respiratory chain. The b-c1 complex mediates electron transfer from ubiquinol to cytochrome c. Contributes to the generation of a proton gradient across the mitochondrial membrane that is then used for ATP synthesis. This Sorex shinto sadonis (Sado shrew) protein is Cytochrome b (MT-CYB).